Reading from the N-terminus, the 122-residue chain is Serum amyloid A-1 protein (122 aa).

Positions 1 to 19 (MKLLTSLVFCSLLLGVCHG) are cleaved as a signal peptide. The important for amyloid formation stretch occupies residues 20 to 45 (GFFSFVHEAFQGAGDMWRAYTDMKEA). A compositionally biased stretch (basic and acidic residues) spans 91–108 (HEDTIADQEANRHGRSGK). The segment at 91 to 122 (HEDTIADQEANRHGRSGKDPNYYRPPGLPDKY) is disordered.

The protein belongs to the SAA family. As to quaternary structure, homohexamer; dimer of trimers. Can form amyloid fibrils after partial proteolysis; the native, undenatured protein does not form amyloid fibrils (in vitro). Apolipoprotein of the HDL complex. Binds to heparin. In terms of tissue distribution, detected in blood plasma (at protein level). Detected in liver.

The protein localises to the secreted. Major acute phase protein. This is Serum amyloid A-1 protein (Saa1) from Mus musculus (Mouse).